Reading from the N-terminus, the 277-residue chain is Large ribosomal subunit protein uL2 (277 aa).

A disordered region spans residues 212–277; it reads RWRGKRPHVR…KFIVRGRKSK (66 aa). Basic residues predominate over residues 254-277; the sequence is TAGKKTRDKKKASTKFIVRGRKSK.

It belongs to the universal ribosomal protein uL2 family. As to quaternary structure, part of the 50S ribosomal subunit. Forms a bridge to the 30S subunit in the 70S ribosome.

In terms of biological role, one of the primary rRNA binding proteins. Required for association of the 30S and 50S subunits to form the 70S ribosome, for tRNA binding and peptide bond formation. It has been suggested to have peptidyltransferase activity; this is somewhat controversial. Makes several contacts with the 16S rRNA in the 70S ribosome. This Leuconostoc citreum (strain KM20) protein is Large ribosomal subunit protein uL2.